A 274-amino-acid polypeptide reads, in one-letter code: Ribose-5-phosphate isomerase (274 aa).

The protein belongs to the ribose 5-phosphate isomerase family.

It localises to the cytoplasm. The catalysed reaction is aldehydo-D-ribose 5-phosphate = D-ribulose 5-phosphate. It participates in carbohydrate degradation; pentose phosphate pathway; D-ribose 5-phosphate from D-ribulose 5-phosphate (non-oxidative stage): step 1/1. The sequence is that of Ribose-5-phosphate isomerase (RKI1) from Kluyveromyces lactis (strain ATCC 8585 / CBS 2359 / DSM 70799 / NBRC 1267 / NRRL Y-1140 / WM37) (Yeast).